We begin with the raw amino-acid sequence, 177 residues long: R-phycoerythrin beta chain (177 aa).

Phycourobilin contacts are provided by Cys-50 and Cys-61. Residue Asn-72 is modified to N4-methylasparagine. (2R,3E)-phycoerythrobilin-binding residues include Cys-82 and Cys-158.

The protein belongs to the phycobiliprotein family. As to quaternary structure, heterodimer of an alpha and a beta chain. Contains two covalently linked phycoerythrobilin chromophores and one covalently linked phycourobilin chromophore.

It localises to the plastid. The protein localises to the chloroplast thylakoid membrane. Its function is as follows. Light-harvesting photosynthetic bile pigment-protein from the phycobiliprotein complex. This is R-phycoerythrin beta chain (cpeB) from Lophosiphonia boldii (Red alga).